The chain runs to 197 residues: 3-isopropylmalate dehydratase small subunit (197 aa).

It belongs to the LeuD family. LeuD type 1 subfamily. In terms of assembly, heterodimer of LeuC and LeuD.

It carries out the reaction (2R,3S)-3-isopropylmalate = (2S)-2-isopropylmalate. The protein operates within amino-acid biosynthesis; L-leucine biosynthesis; L-leucine from 3-methyl-2-oxobutanoate: step 2/4. Its function is as follows. Catalyzes the isomerization between 2-isopropylmalate and 3-isopropylmalate, via the formation of 2-isopropylmaleate. The chain is 3-isopropylmalate dehydratase small subunit from Geobacillus kaustophilus (strain HTA426).